The chain runs to 601 residues: NADPH--cytochrome P450 reductase (601 aa).

Residues 25-169 (IVVFYGSQTG…DFVTWREQFW (145 aa)) form the Flavodoxin-like domain. FMN-binding positions include 31–36 (SQTGTG), 83–86 (ATYG), 118–127 (LGDKTYEHYN), and Asp153. The 202-residue stretch at 224 to 425 (KNPFLAPVTV…ICAVLVEYXT (202 aa)) folds into the FAD-binding FR-type domain. FAD is bound by residues 399 to 402 (RYYS), 417 to 419 (CAV), Tyr423, and 427 to 430 (GVAT). NADP(+)-binding positions include Thr458, 519–520 (SR), 525–529 (KVYVQ), and Asp562. An FAD-binding site is contributed by Trp600.

Belongs to the NADPH--cytochrome P450 reductase family. The protein in the N-terminal section; belongs to the flavodoxin family. This sequence in the C-terminal section; belongs to the flavoprotein pyridine nucleotide cytochrome reductase family. It depends on FAD as a cofactor. Requires FMN as cofactor.

It localises to the endoplasmic reticulum membrane. It catalyses the reaction 2 oxidized [cytochrome P450] + NADPH = 2 reduced [cytochrome P450] + NADP(+) + H(+). This enzyme is required for electron transfer from NADP to cytochrome P450 in microsomes. It can also provide electron transfer to heme oxygenase and cytochrome B5. The sequence is that of NADPH--cytochrome P450 reductase from Salmo trutta (Brown trout).